Here is a 237-residue protein sequence, read N- to C-terminus: Ribonuclease PH (237 aa).

Phosphate contacts are provided by residues R86 and 124 to 126 (GTR).

This sequence belongs to the RNase PH family. In terms of assembly, homohexameric ring arranged as a trimer of dimers.

It catalyses the reaction tRNA(n+1) + phosphate = tRNA(n) + a ribonucleoside 5'-diphosphate. Its function is as follows. Phosphorolytic 3'-5' exoribonuclease that plays an important role in tRNA 3'-end maturation. Removes nucleotide residues following the 3'-CCA terminus of tRNAs; can also add nucleotides to the ends of RNA molecules by using nucleoside diphosphates as substrates, but this may not be physiologically important. Probably plays a role in initiation of 16S rRNA degradation (leading to ribosome degradation) during starvation. The sequence is that of Ribonuclease PH from Methylocella silvestris (strain DSM 15510 / CIP 108128 / LMG 27833 / NCIMB 13906 / BL2).